The sequence spans 202 residues: Small ribosomal subunit protein uS4 (202 aa).

Residues 22-43 (TRKSARRAYPPGQHGQNRKKRS) form a disordered region. The S4 RNA-binding domain maps to 90-152 (MRLDNTVFRL…APSRKLVENN (63 aa)).

The protein belongs to the universal ribosomal protein uS4 family. Part of the 30S ribosomal subunit. Contacts protein S5. The interaction surface between S4 and S5 is involved in control of translational fidelity.

Functionally, one of the primary rRNA binding proteins, it binds directly to 16S rRNA where it nucleates assembly of the body of the 30S subunit. Its function is as follows. With S5 and S12 plays an important role in translational accuracy. The polypeptide is Small ribosomal subunit protein uS4 (Nostoc sp. (strain PCC 7120 / SAG 25.82 / UTEX 2576)).